The primary structure comprises 257 residues: Zinc transporter ZupT (257 aa).

8 consecutive transmembrane segments (helical) span residues 5 to 25, 32 to 52, 61 to 81, 109 to 129, 137 to 157, 171 to 191, 195 to 215, and 236 to 256; these read LILT…GVLG, LLAF…LMEM, GMSP…YFGL, AILL…ATFV, LGFG…LAVA, ILWA…AWLI, MISP…MVAL, and GVLC…TAGI. Residues N120 and E123 each contribute to the Fe(2+) site. Zn(2+)-binding residues include E123 and H148. 3 residues coordinate Fe(2+): N149, E152, and E181. E152 contributes to the Zn(2+) binding site.

The protein belongs to the ZIP transporter (TC 2.A.5) family. ZupT subfamily.

Its subcellular location is the cell inner membrane. It carries out the reaction Zn(2+)(in) = Zn(2+)(out). Its function is as follows. Mediates zinc uptake. May also transport other divalent cations. The chain is Zinc transporter ZupT from Shigella flexneri serotype 5b (strain 8401).